Reading from the N-terminus, the 685-residue chain is ABC transporter G family member 26 (685 aa).

Residues 65-329 (LKFEDVEYKV…FSSLRILPEI (265 aa)) enclose the ABC transporter domain. An ATP-binding site is contributed by 124 to 131 (GPSGSGKT). The ABC transmembrane type-2 domain occupies 414 to 623 (DQFLILSRRT…GFRLLLKVQY (210 aa)). 6 helical membrane passes run 432 to 452 (FDKL…LLWW), 468 to 488 (LMFY…VYVF), 518 to 538 (MVAH…MAEF), 542 to 562 (IPCF…SQGA), 576 to 596 (AGMI…YYVQ), and 648 to 668 (TINL…AFGY).

Belongs to the ABC transporter superfamily. ABCG family. Eye pigment precursor importer (TC 3.A.1.204) subfamily. Homo- or heterodimer. Mostly expressed in flowers, especially in tapetum within anthers.

It localises to the cell membrane. The protein resides in the endoplasmic reticulum membrane. Its function is as follows. Mediates the transport of sporopollenin precursors (e.g. polyketides) across the tapetum plasma membrane into the anther locule for polymerization on developing microspore walls, thus being required for male fertility and pollen exine formation and patterning prior to tapetum programmed cell death. The protein is ABC transporter G family member 26 of Arabidopsis thaliana (Mouse-ear cress).